The following is a 554-amino-acid chain: Glucose-6-phosphate isomerase (554 aa).

The active-site Proton donor is the E358. Catalysis depends on residues H389 and K515. Over residues 527-540 (ANNSPAPQSDSSTD) the composition is skewed to polar residues. Residues 527–554 (ANNSPAPQSDSSTDALVRRYRSERGRTS) form a disordered region. Basic and acidic residues predominate over residues 542 to 554 (LVRRYRSERGRTS).

It belongs to the GPI family.

It is found in the cytoplasm. The catalysed reaction is alpha-D-glucose 6-phosphate = beta-D-fructose 6-phosphate. The protein operates within carbohydrate biosynthesis; gluconeogenesis. It functions in the pathway carbohydrate degradation; glycolysis; D-glyceraldehyde 3-phosphate and glycerone phosphate from D-glucose: step 2/4. In terms of biological role, catalyzes the reversible isomerization of glucose-6-phosphate to fructose-6-phosphate. This chain is Glucose-6-phosphate isomerase, found in Mycolicibacterium paratuberculosis (strain ATCC BAA-968 / K-10) (Mycobacterium paratuberculosis).